Here is a 411-residue protein sequence, read N- to C-terminus: Corticotropin-releasing factor receptor 2 (411 aa).

Residues 1 to 19 (MDAALLLSLLEANCSLALA) constitute a signal peptide (not cleaved). The Extracellular segment spans residues 1-108 (MDAALLLSLL…EPILDDKQRK (108 aa)). N-linked (GlcNAc...) asparagine glycans are attached at residues N13, N41, N74, N86, and N94. Intrachain disulfides connect C14-C50, C40-C83, and C64-C98. Residues 109 to 139 (YDLHYRIALIVNYLGHCVSVVALVAAFLLFL) traverse the membrane as a helical segment. The Cytoplasmic segment spans residues 140–146 (VLRSIRC). The helical transmembrane segment at 147 to 171 (LRNVIHWNLITTFILRNIAWFLLQL) threads the bilayer. Residues 172-185 (IDHEVHEGNEVWCR) are Extracellular-facing. C184 and C254 are disulfide-bonded. The chain crosses the membrane as a helical span at residues 186–214 (CITTIFNYFVVTNFFWMFVEGCYLHTAIV). Topologically, residues 215 to 221 (MTYSTEH) are cytoplasmic. The chain crosses the membrane as a helical span at residues 222 to 249 (LRKWLFLFIGWCIPCPIIIAWAVGKLYY). At 250–265 (ENEQCWFGKEAGDLVD) the chain is on the extracellular side. The chain crosses the membrane as a helical span at residues 266-291 (YIYQGPVMLVLLINFVFLFNIVRILM). Over 292-302 (TKLRASTTSET) the chain is Cytoplasmic. The chain crosses the membrane as a helical span at residues 303–327 (IQYRKAVKATLVLLPLLGITYMLFF). Residues 328-334 (VNPGEDD) are Extracellular-facing. The helical transmembrane segment at 335–364 (LSQIVFIYFNSFLQSFQGFFVSVFYCFFNG) threads the bilayer. The Cytoplasmic portion of the chain corresponds to 365–411 (EVRAALRKRWHRWQDHHALRVPVARAMSIPTSPTRISFHSIKQTAAV).

It belongs to the G-protein coupled receptor 2 family. Monomer. Interacts with CRF, UCN, UCN2 and UCN3. In terms of processing, a N-glycosylation site within the signal peptide impedes its proper cleavage and function. As to expression, highly expressed in the heart. Also expressed in lungs, skeletal muscle, gastrointestinal tract, epididymis, and brain.

The protein localises to the cell membrane. G-protein coupled receptor for CRH (corticotropin-releasing factor), UCN (urocortin), UCN2 and UCN3. Has high affinity for UCN. Ligand binding causes a conformation change that triggers signaling via guanine nucleotide-binding proteins (G proteins) and down-stream effectors, such as adenylate cyclase. Promotes the activation of adenylate cyclase, leading to increased intracellular cAMP levels. In Mus musculus (Mouse), this protein is Corticotropin-releasing factor receptor 2 (Crhr2).